Here is a 72-residue protein sequence, read N- to C-terminus: Translation initiation factor IF-1 (72 aa).

In terms of domain architecture, S1-like spans 1–72; sequence MSKQSSIEQD…TKGRIVFRYK (72 aa).

Belongs to the IF-1 family. As to quaternary structure, component of the 30S ribosomal translation pre-initiation complex which assembles on the 30S ribosome in the order IF-2 and IF-3, IF-1 and N-formylmethionyl-tRNA(fMet); mRNA recruitment can occur at any time during PIC assembly.

Its subcellular location is the cytoplasm. Functionally, one of the essential components for the initiation of protein synthesis. Stabilizes the binding of IF-2 and IF-3 on the 30S subunit to which N-formylmethionyl-tRNA(fMet) subsequently binds. Helps modulate mRNA selection, yielding the 30S pre-initiation complex (PIC). Upon addition of the 50S ribosomal subunit IF-1, IF-2 and IF-3 are released leaving the mature 70S translation initiation complex. This is Translation initiation factor IF-1 from Cytophaga hutchinsonii (strain ATCC 33406 / DSM 1761 / CIP 103989 / NBRC 15051 / NCIMB 9469 / D465).